A 378-amino-acid polypeptide reads, in one-letter code: MKFELKTTDGRARRGQLVFERGTVQTPAFMPVGTYGTVKGMTPEEVRETGAQILLGNTFHLWLRPGQEVMRAHGDLHDFMNWQGPILTDSGGFQVFSLGHIRKITEAGVHFRHPINGEKIFLDPEKSMEIQYDLGSDIVMIFDECTPYPATYEEARKSMEMSLRWGKRSRDKFDALGNKNALFGIIQGSVYEDLRDVSLDGLLEIGFDGYAVGGLAVGEPKEDMHRILEHVCPKIPADKPRYLMGVGKPEDLVEGVRRGIDMFDCVMPTRNARNGHLFTTDGVVKIRNAKYREDTSTLDADCDCYTCKNYTRSYLYHLDKCNEILGARLNTIHNLRYYQRVMQGLRDAIEQGKLDDFVTEFYRRQGKPVPPLAENDVK.

The active-site Proton acceptor is D89. Substrate-binding positions include 89–93 (DSGGF), D143, Q187, and G214. An RNA binding region spans residues 245–251 (GVGKPED). D264 serves as the catalytic Nucleophile. Residues 269–273 (TRNAR) form an RNA binding; important for wobble base 34 recognition region. C302, C304, C307, and H333 together coordinate Zn(2+).

This sequence belongs to the queuine tRNA-ribosyltransferase family. Homodimer. Within each dimer, one monomer is responsible for RNA recognition and catalysis, while the other monomer binds to the replacement base PreQ1. Requires Zn(2+) as cofactor.

The catalysed reaction is 7-aminomethyl-7-carbaguanine + guanosine(34) in tRNA = 7-aminomethyl-7-carbaguanosine(34) in tRNA + guanine. It functions in the pathway tRNA modification; tRNA-queuosine biosynthesis. Catalyzes the base-exchange of a guanine (G) residue with the queuine precursor 7-aminomethyl-7-deazaguanine (PreQ1) at position 34 (anticodon wobble position) in tRNAs with GU(N) anticodons (tRNA-Asp, -Asn, -His and -Tyr). Catalysis occurs through a double-displacement mechanism. The nucleophile active site attacks the C1' of nucleotide 34 to detach the guanine base from the RNA, forming a covalent enzyme-RNA intermediate. The proton acceptor active site deprotonates the incoming PreQ1, allowing a nucleophilic attack on the C1' of the ribose to form the product. After dissociation, two additional enzymatic reactions on the tRNA convert PreQ1 to queuine (Q), resulting in the hypermodified nucleoside queuosine (7-(((4,5-cis-dihydroxy-2-cyclopenten-1-yl)amino)methyl)-7-deazaguanosine). The protein is Queuine tRNA-ribosyltransferase of Aeromonas hydrophila subsp. hydrophila (strain ATCC 7966 / DSM 30187 / BCRC 13018 / CCUG 14551 / JCM 1027 / KCTC 2358 / NCIMB 9240 / NCTC 8049).